The chain runs to 174 residues: MRAFFVGRFQPYHLGHHEVVKNVLQKVDELIIGIGSAQESHSLENPFTAGERVLMIDRAVDEIKRELGIDKKVYIIPLEDIYRNSLWVAHVCSMVPPFDVVYTNNPLVYRLFKEAGFKVMHTKMYNRNEYHGTEIRRKMLEGEDWEKYVPESVAEIIKEIDGIKRLRDISGRDF.

It belongs to the archaeal NMN adenylyltransferase family.

The protein resides in the cytoplasm. The enzyme catalyses beta-nicotinamide D-ribonucleotide + ATP + H(+) = diphosphate + NAD(+). The protein operates within cofactor biosynthesis; NAD(+) biosynthesis; NAD(+) from nicotinamide D-ribonucleotide: step 1/1. The chain is Nicotinamide-nucleotide adenylyltransferase from Archaeoglobus fulgidus (strain ATCC 49558 / DSM 4304 / JCM 9628 / NBRC 100126 / VC-16).